A 526-amino-acid polypeptide reads, in one-letter code: Peptide chain release factor 3 (526 aa).

In terms of domain architecture, tr-type G spans 9 to 277 (ERRRTFAIIS…AFAEYAPPPQ (269 aa)). GTP contacts are provided by residues 18–25 (SHPDAGKT), 86–90 (DTPGH), and 140–143 (NKLD).

Belongs to the TRAFAC class translation factor GTPase superfamily. Classic translation factor GTPase family. PrfC subfamily.

The protein resides in the cytoplasm. Its function is as follows. Increases the formation of ribosomal termination complexes and stimulates activities of RF-1 and RF-2. It binds guanine nucleotides and has strong preference for UGA stop codons. It may interact directly with the ribosome. The stimulation of RF-1 and RF-2 is significantly reduced by GTP and GDP, but not by GMP. The sequence is that of Peptide chain release factor 3 from Methylococcus capsulatus (strain ATCC 33009 / NCIMB 11132 / Bath).